The chain runs to 364 residues: tRNA 2-selenouridine synthase (364 aa).

The Rhodanese domain occupies 14-137; the sequence is LLADTPLIDV…LRQTAIQATW (124 aa). C97 acts as the S-selanylcysteine intermediate in catalysis. (2E)-geranyl diphosphate is bound at residue G149.

Belongs to the SelU family. As to quaternary structure, monomer.

It catalyses the reaction 5-methylaminomethyl-2-thiouridine(34) in tRNA + selenophosphate + (2E)-geranyl diphosphate + H2O + H(+) = 5-methylaminomethyl-2-selenouridine(34) in tRNA + (2E)-thiogeraniol + phosphate + diphosphate. The catalysed reaction is 5-methylaminomethyl-2-thiouridine(34) in tRNA + (2E)-geranyl diphosphate = 5-methylaminomethyl-S-(2E)-geranyl-thiouridine(34) in tRNA + diphosphate. It carries out the reaction 5-methylaminomethyl-S-(2E)-geranyl-thiouridine(34) in tRNA + selenophosphate + H(+) = 5-methylaminomethyl-2-(Se-phospho)selenouridine(34) in tRNA + (2E)-thiogeraniol. The enzyme catalyses 5-methylaminomethyl-2-(Se-phospho)selenouridine(34) in tRNA + H2O = 5-methylaminomethyl-2-selenouridine(34) in tRNA + phosphate. Its function is as follows. Involved in the post-transcriptional modification of the uridine at the wobble position (U34) of tRNA(Lys), tRNA(Glu) and tRNA(Gln). Catalyzes the conversion of 2-thiouridine (S2U-RNA) to 2-selenouridine (Se2U-RNA). Acts in a two-step process involving geranylation of 2-thiouridine (S2U) to S-geranyl-2-thiouridine (geS2U) and subsequent selenation of the latter derivative to 2-selenouridine (Se2U) in the tRNA chain. The sequence is that of tRNA 2-selenouridine synthase from Salmonella typhimurium (strain LT2 / SGSC1412 / ATCC 700720).